The primary structure comprises 355 residues: MEISDFTEAYPTTTEFDYGDSTPCQKTAVRAFGAGLLPPLYSLVFIIGVVGNVLVILVLMQHRRLQSMTSIYLFNLAVSDLVFLFTLPFWIDYKLKDDWIFGDAMCKLLSGFYYLGLYSEIFFIILLTIDRYLAIVHAVFALRARTVTFGIITSIITWALAILASMPALYFFKAQWEFTHRTCSPHFPYKSLKQWKRFQALKLNLLGLILPLLVMIICYAGIIRILLRRPSEKKVKAVRLIFAITLLFFLLWTPYNLSVFVSAFQDVLFTNQCEQSKQLDLAMQVTEVIAYTHCCVNPIIYVFVGERFWKYLRQLFQRHVAIPLAKWLPFLSVDQLERTSSISPSTGEHELSAGF.

The Extracellular portion of the chain corresponds to 1 to 34 (MEISDFTEAYPTTTEFDYGDSTPCQKTAVRAFGA). The helical transmembrane segment at 35–60 (GLLPPLYSLVFIIGVVGNVLVILVLM) threads the bilayer. Over 61–64 (QHRR) the chain is Cytoplasmic. Residues 65-91 (LQSMTSIYLFNLAVSDLVFLFTLPFWI) form a helical membrane-spanning segment. Residues 92–107 (DYKLKDDWIFGDAMCK) lie on the Extracellular side of the membrane. A disulfide bond links Cys106 and Cys183. The helical transmembrane segment at 108–129 (LLSGFYYLGLYSEIFFIILLTI) threads the bilayer. Topologically, residues 130-146 (DRYLAIVHAVFALRART) are cytoplasmic. A helical transmembrane segment spans residues 147–171 (VTFGIITSIITWALAILASMPALYF). Topologically, residues 172 to 197 (FKAQWEFTHRTCSPHFPYKSLKQWKR) are extracellular. The helical transmembrane segment at 198 to 223 (FQALKLNLLGLILPLLVMIICYAGII) threads the bilayer. Residues 224–239 (RILLRRPSEKKVKAVR) are Cytoplasmic-facing. A helical membrane pass occupies residues 240-264 (LIFAITLLFFLLWTPYNLSVFVSAF). Residues 265–281 (QDVLFTNQCEQSKQLDL) lie on the Extracellular side of the membrane. A helical membrane pass occupies residues 282-305 (AMQVTEVIAYTHCCVNPIIYVFVG). Residues 306–355 (ERFWKYLRQLFQRHVAIPLAKWLPFLSVDQLERTSSISPSTGEHELSAGF) are Cytoplasmic-facing.

It belongs to the G-protein coupled receptor 1 family. Interacts with CREB3. Interacts with CCL3. Interacts with CCL15. Interacts with CCL23. Interacts with GNAI1. Interacts with PF4/CXCL4. As to expression, detected in the heart, spleen, lung, peritoneal exudate cells and leukocytes.

The protein localises to the cell membrane. Chemokine receptor that plays a crucial role in regulating immune cell migration, inflammation, and immune responses. Contributes to the inflammatory response by recruiting immune cells, such as monocytes, macrophages, T-cells, and dendritic cells, to sites of inflammation for the clearance of pathogens and the resolution of tissue damage. When activated by its ligands including CCL3, CCL5-9, CCL13-16 and CCL23, triggers a signaling cascade within immune cells, leading to their migration towards the source of the chemokine. For example, mediates neutrophil migration after activation by CCL3 leading to the sequential release of TNF-alpha and leukotriene B4. Also mediates monocyte migration upon CXCL4 binding. Activation by CCL5 results in neuroinflammation through the ERK1/2 signaling pathway. In Mus musculus (Mouse), this protein is C-C chemokine receptor type 1 (Ccr1).